The chain runs to 393 residues: 4-hydroxyphenylpyruvate dioxygenase (393 aa).

An N-acetylthreonine modification is found at T2. VOC domains are found at residues 18–149 and 180–338; these read HFHS…LVEK and MIDH…IFTK. K132 bears the N6-succinyllysine mark. H183 lines the Fe cation pocket. Residues S211, S226, and S250 each carry the phosphoserine modification. Residues H266 and E349 each contribute to the Fe cation site.

Belongs to the 4HPPD family. Homodimer. Requires Fe cation as cofactor.

It localises to the cytoplasm. The protein resides in the endoplasmic reticulum membrane. The protein localises to the golgi apparatus membrane. The catalysed reaction is 3-(4-hydroxyphenyl)pyruvate + O2 = homogentisate + CO2. It functions in the pathway amino-acid degradation; L-phenylalanine degradation; acetoacetate and fumarate from L-phenylalanine: step 3/6. Its function is as follows. Catalyzes the conversion of 4-hydroxyphenylpyruvic acid to homogentisic acid, one of the steps in tyrosine catabolism. In Homo sapiens (Human), this protein is 4-hydroxyphenylpyruvate dioxygenase (HPD).